The chain runs to 440 residues: Enolase (440 aa).

Substrate-binding residues include His159 and Glu168. The Proton donor role is filled by Glu211. Mg(2+) contacts are provided by Asp245, Glu296, and Asp321. Substrate is bound by residues Glu296 and Asp321. Catalysis depends on Lys346, which acts as the Proton acceptor. Substrate is bound by residues Ser373–Ser376 and Lys397.

The protein belongs to the enolase family. Homodimer. Mg(2+) serves as cofactor.

The protein resides in the cytoplasm. The catalysed reaction is (2R)-2-phosphoglycerate = phosphoenolpyruvate + H2O. The protein operates within carbohydrate degradation; glycolysis; pyruvate from D-glyceraldehyde 3-phosphate: step 4/5. The chain is Enolase (eno-1) from Tuber borchii (White truffle).